We begin with the raw amino-acid sequence, 346 residues long: Probable WRKY transcription factor 54 (346 aa).

Residues 109–130 (PVSCNGGDSGESKKKRLGVGKG) form a disordered region. The segment covering 121–130 (KKKRLGVGKG) has biased composition (basic residues). Residues 146–214 (VEAKSSEDRY…YIGYHTCTAN (69 aa)) constitute a DNA-binding region (WRKY). The segment covering 267–282 (VKEEQNNNGDQSKDYY) has biased composition (basic and acidic residues). The segment at 267 to 286 (VKEEQNNNGDQSKDYYEGSS) is disordered.

It belongs to the WRKY group III family. Interacts with WRKY30. Binds to BZR2/BES1 to cooperatively regulate the expression of target genes. Interacts with ASK7/BIN2. Phosphorylated and destabilized by ASK7/BIN2. Expressed in leaves.

The protein resides in the nucleus. Functionally, transcription factor. Interacts specifically with the W box (5'-(T)TGAC[CT]-3'), a frequently occurring elicitor-responsive cis-acting element. Together with WRKY70, negative regulator of developmental senescence, probably via the regulation of several senescence-associated markers genes. Positive regulator of EDS1-dependent defense against E.amylovora. In collaboration with WRKY70, prevents stomatal closure and, consequently, osmotic stress tolerance. Together with WRKY46 and WRKY70, promotes brassinosteroid (BR)-regulated plant growth but prevent drought response by modulating gene expression. Negative regulator of SA biosynthesis. Prevents defense response to the necrotrophic pathogens P.carotovorum and B.cinerea, but promotes defense against biotrophic/hemibiotrophic pathogens P.syringae pv. tomato (Pst) DC3000, probably by regulating negatively the jasmonic acid (JA)/ethylene (ET) and positively the salicylic acid (SA) signaling pathways. This is Probable WRKY transcription factor 54 from Arabidopsis thaliana (Mouse-ear cress).